The following is a 419-amino-acid chain: Enolase (419 aa).

Residue Gln-160 coordinates (2R)-2-phosphoglycerate. Residue Glu-204 is the Proton donor of the active site. Positions 240, 283, and 309 each coordinate Mg(2+). (2R)-2-phosphoglycerate contacts are provided by Lys-334, Arg-363, Ser-364, and Lys-385. The active-site Proton acceptor is Lys-334.

This sequence belongs to the enolase family. Mg(2+) is required as a cofactor.

It localises to the cytoplasm. It is found in the secreted. The protein localises to the cell surface. The catalysed reaction is (2R)-2-phosphoglycerate = phosphoenolpyruvate + H2O. The protein operates within carbohydrate degradation; glycolysis; pyruvate from D-glyceraldehyde 3-phosphate: step 4/5. Its function is as follows. Catalyzes the reversible conversion of 2-phosphoglycerate (2-PG) into phosphoenolpyruvate (PEP). It is essential for the degradation of carbohydrates via glycolysis. This Pyrobaculum aerophilum (strain ATCC 51768 / DSM 7523 / JCM 9630 / CIP 104966 / NBRC 100827 / IM2) protein is Enolase.